The primary structure comprises 249 residues: Uridylate kinase (249 aa).

15 to 18 is a binding site for ATP; that stretch reads KLSG. The involved in allosteric activation by GTP stretch occupies residues 23–28; sequence GEEGFG. G57 lines the UMP pocket. ATP-binding residues include G58 and R62. Residues D77 and 138–145 contribute to the UMP site; that span reads TGNPFFTT. T165, F171, and D174 together coordinate ATP.

This sequence belongs to the UMP kinase family. Homohexamer.

It localises to the cytoplasm. The catalysed reaction is UMP + ATP = UDP + ADP. Its pathway is pyrimidine metabolism; CTP biosynthesis via de novo pathway; UDP from UMP (UMPK route): step 1/1. With respect to regulation, allosterically activated by GTP. Inhibited by UTP. In terms of biological role, catalyzes the reversible phosphorylation of UMP to UDP. The sequence is that of Uridylate kinase from Psychromonas ingrahamii (strain DSM 17664 / CCUG 51855 / 37).